A 384-amino-acid chain; its full sequence is Dehydrogenase ALT3 (384 aa).

Belongs to the iron-containing alcohol dehydrogenase family. Fe cation serves as cofactor.

It functions in the pathway mycotoxin biosynthesis. Functionally, dehydrogenase; part of the gene cluster that mediates the biosynthesis of the host-selective toxins (HSTs) AAL-toxins, sphinganine-analog mycotoxins responsible for Alternaria stem canker on tomato by the tomato pathotype. The biosynthesis starts with the polyketide synthase ALT1-catalyzed C-16 carbon chain assembly from one starter acetyl-CoA unit with malonyl-CoA extender units. ALT1 also selectively transfers methyl groups at the first and the third cycle of chain elongation for AAL toxin. The C-16 polyketide chain is released from the enzyme by a nucleophilic attack of a carbanion, which is derived from R-carbon of glycin by decarboxylation, on the carbonyl carbon of polyketide acyl chain. This step is probably catalyzed by a pyridoxal 5'-phosphate-dependent aminoacyl transferase ALT4. The respective functions of the other enzymes encoded by the cluster have still to be elucidated. The sphingosine N-acyltransferase-like protein ALT7 seems not to act as a resistance/self-tolerance factor against the toxin in the toxin biosynthetic gene cluster, contrary to what is expected. The sequence is that of Dehydrogenase ALT3 from Alternaria alternata (Alternaria rot fungus).